A 149-amino-acid chain; its full sequence is Macrodomain Ter protein (149 aa).

This sequence belongs to the MatP family. Homodimer.

The protein resides in the cytoplasm. Functionally, required for spatial organization of the terminus region of the chromosome (Ter macrodomain) during the cell cycle. Prevents early segregation of duplicated Ter macrodomains during cell division. Binds specifically to matS, which is a 13 bp signature motif repeated within the Ter macrodomain. In Vibrio campbellii (strain ATCC BAA-1116), this protein is Macrodomain Ter protein.